The sequence spans 513 residues: ATP synthase subunit alpha (513 aa).

169–176 is an ATP binding site; that stretch reads GDRQTGKT.

It belongs to the ATPase alpha/beta chains family. In terms of assembly, F-type ATPases have 2 components, CF(1) - the catalytic core - and CF(0) - the membrane proton channel. CF(1) has five subunits: alpha(3), beta(3), gamma(1), delta(1), epsilon(1). CF(0) has three main subunits: a(1), b(2) and c(9-12). The alpha and beta chains form an alternating ring which encloses part of the gamma chain. CF(1) is attached to CF(0) by a central stalk formed by the gamma and epsilon chains, while a peripheral stalk is formed by the delta and b chains.

It is found in the cell inner membrane. It catalyses the reaction ATP + H2O + 4 H(+)(in) = ADP + phosphate + 5 H(+)(out). Functionally, produces ATP from ADP in the presence of a proton gradient across the membrane. The alpha chain is a regulatory subunit. This is ATP synthase subunit alpha from Halorhodospira halophila (strain DSM 244 / SL1) (Ectothiorhodospira halophila (strain DSM 244 / SL1)).